The sequence spans 253 residues: MFNPTHALLIIQRRGSYLQPVLTEYLTRVVCEQQTGCQTCPSCLEILHGTYNNFYSFDQANPFKREHALHLSEVLNRQSESNQKQLYLIKNLETLTATAMNSLLRLIEEHPVNTYGVFTTKNENMILPTILSRVQKVVLKKATQLPFQVDSKDQAILKSFFSVDEQLQALDNGSFTRLKTIITTLTNKKNTASTVHEAWVLFKQLNQTETAQVLNFMVDYTKDLTKKDRLLNMVQNLVFNPPKAALFANLINW.

This is an uncharacterized protein from Mycoplasma pneumoniae (strain ATCC 29342 / M129 / Subtype 1) (Mycoplasmoides pneumoniae).